The following is a 349-amino-acid chain: Insulin gene enhancer protein isl-1 (349 aa).

LIM zinc-binding domains follow at residues 17 to 70 (CVGC…CKRD) and 79 to 133 (CAKC…RADH). The segment at residues 181–240 (TTRVRTVLNEKQLHTLRTCYNANPRPDALMKEQLVEMTGLSPRVIRVWFQNKRCKDKKRS) is a DNA-binding region (homeobox). A disordered region spans residues 312–349 (VNFSEGGPGSNSTGSEVASMSSQLPDTPNSMVASPIEA). Residues 321–343 (SNSTGSEVASMSSQLPDTPNSMV) are compositionally biased toward polar residues.

It localises to the nucleus. Functionally, DNA-binding transcriptional activator. Recognizes and binds to the consensus octamer binding site 5'-ATAATTAA-3' in promoter of target genes. Plays a fundamental role in the gene regulatory network essential for retinal ganglion cell (RGC) differentiation. May be involved in subtype specialization of primary motoneurons. May bind to insulin gene enhancer sequences. Essential for heart development. This Danio rerio (Zebrafish) protein is Insulin gene enhancer protein isl-1 (isl1).